The sequence spans 476 residues: tRNA(Ile)-lysidine synthase (476 aa).

ATP is bound at residue 30 to 35 (SGGPDS).

This sequence belongs to the tRNA(Ile)-lysidine synthase family.

It localises to the cytoplasm. It catalyses the reaction cytidine(34) in tRNA(Ile2) + L-lysine + ATP = lysidine(34) in tRNA(Ile2) + AMP + diphosphate + H(+). Functionally, ligates lysine onto the cytidine present at position 34 of the AUA codon-specific tRNA(Ile) that contains the anticodon CAU, in an ATP-dependent manner. Cytidine is converted to lysidine, thus changing the amino acid specificity of the tRNA from methionine to isoleucine. In Bacillus anthracis, this protein is tRNA(Ile)-lysidine synthase.